The chain runs to 219 residues: PKHD-type hydroxylase AM1_3707 (219 aa).

The Fe2OG dioxygenase domain maps to 78–172 (SIHTLLFSRY…RLVAVGWVQS (95 aa)). 3 residues coordinate Fe cation: His96, Asp98, and His153. Residue Arg163 coordinates 2-oxoglutarate.

The cofactor is Fe(2+). It depends on L-ascorbate as a cofactor.

This Acaryochloris marina (strain MBIC 11017) protein is PKHD-type hydroxylase AM1_3707.